The chain runs to 90 residues: DNA-binding protein HU-beta (90 aa).

Belongs to the bacterial histone-like protein family. As to quaternary structure, heterodimer of an alpha and a beta chain.

Functionally, histone-like DNA-binding protein which is capable of wrapping DNA to stabilize it, and thus to prevent its denaturation under extreme environmental conditions. This is DNA-binding protein HU-beta (hupB) from Pseudomonas aeruginosa (strain ATCC 15692 / DSM 22644 / CIP 104116 / JCM 14847 / LMG 12228 / 1C / PRS 101 / PAO1).